Reading from the N-terminus, the 215-residue chain is Cytochrome c biogenesis ATP-binding export protein CcmA (215 aa).

One can recognise an ABC transporter domain in the interval 3-215 (LEAENLAGER…MAAFSVEDIA (213 aa)). Residue 35-42 (GPNGSGKS) participates in ATP binding.

The protein belongs to the ABC transporter superfamily. CcmA exporter (TC 3.A.1.107) family. As to quaternary structure, the complex is composed of two ATP-binding proteins (CcmA) and two transmembrane proteins (CcmB).

It is found in the cell inner membrane. It catalyses the reaction heme b(in) + ATP + H2O = heme b(out) + ADP + phosphate + H(+). In terms of biological role, part of the ABC transporter complex CcmAB involved in the biogenesis of c-type cytochromes; once thought to export heme, this seems not to be the case, but its exact role is uncertain. Responsible for energy coupling to the transport system. The protein is Cytochrome c biogenesis ATP-binding export protein CcmA of Brucella melitensis biotype 1 (strain ATCC 23456 / CCUG 17765 / NCTC 10094 / 16M).